A 424-amino-acid polypeptide reads, in one-letter code: N-succinylarginine dihydrolase (424 aa).

Residues 19-28 (AGLSRGNVAS), Asn110, and 137-138 (HR) contribute to the substrate site. Glu174 is a catalytic residue. Residue Arg206 coordinates substrate. His242 is an active-site residue. The substrate site is built by Asp244 and Asn351. The active-site Nucleophile is Cys357.

It belongs to the succinylarginine dihydrolase family. In terms of assembly, homodimer.

The enzyme catalyses N(2)-succinyl-L-arginine + 2 H2O + 2 H(+) = N(2)-succinyl-L-ornithine + 2 NH4(+) + CO2. The protein operates within amino-acid degradation; L-arginine degradation via AST pathway; L-glutamate and succinate from L-arginine: step 2/5. Functionally, catalyzes the hydrolysis of N(2)-succinylarginine into N(2)-succinylornithine, ammonia and CO(2). This chain is N-succinylarginine dihydrolase, found in Zymomonas mobilis subsp. mobilis (strain ATCC 31821 / ZM4 / CP4).